The primary structure comprises 225 residues: Cytidylate kinase (225 aa).

Residue glycine 11 to threonine 19 participates in ATP binding.

This sequence belongs to the cytidylate kinase family. Type 1 subfamily.

It localises to the cytoplasm. The enzyme catalyses CMP + ATP = CDP + ADP. The catalysed reaction is dCMP + ATP = dCDP + ADP. This chain is Cytidylate kinase, found in Bacillus cereus (strain B4264).